A 255-amino-acid chain; its full sequence is Flap endonuclease Xni (255 aa).

Position 105 (aspartate 105) interacts with Mg(2+). One can recognise a 5'-3' exonuclease domain in the interval 162-253 (EHSQFIDYLA…NLSQFRLPNP (92 aa)). The K(+) site is built by leucine 172, alanine 173, proline 181, valine 183, and isoleucine 186. The interval 185 to 190 (GIGPKS) is interaction with DNA.

This sequence belongs to the Xni family. Mg(2+) is required as a cofactor. Requires K(+) as cofactor.

Its function is as follows. Has flap endonuclease activity. During DNA replication, flap endonucleases cleave the 5'-overhanging flap structure that is generated by displacement synthesis when DNA polymerase encounters the 5'-end of a downstream Okazaki fragment. The sequence is that of Flap endonuclease Xni from Shewanella sediminis (strain HAW-EB3).